We begin with the raw amino-acid sequence, 261 residues long: Neurovirulence factor ICP34.5 (261 aa).

Positions 1-17 are enriched in basic residues; it reads MSRRRGPRRRGPRRRPR. Residues 1–19 are required for nucleolar localization; the sequence is MSRRRGPRRRGPRRRPRPG. Disordered regions lie at residues 1–59, 75–135, and 145–164; these read MSRR…SAPA, DSDD…LALR, and RLSL…APRG. 4 repeats span residues 3-7, 8-12, 16-23, and 24-31; these read RRRGP and PRPGAPAV. Positions 3–12 are 2 X 5 AA tandem repeats of R-R-R-G-P; it reads RRRGPRRRGP. Positions 16 to 31 are 2 X 8 AA tandem repeats of P-R-P-G-A-P-A-V; it reads PRPGAPAVPRPGAPAV. Positions 18 to 32 are enriched in pro residues; it reads PGAPAVPRPGAPAVP. Over residues 75 to 88 the composition is skewed to acidic residues; that stretch reads DSDDADYAGNDDAE. Positions 101–111 are enriched in low complexity; sequence APEAPHAAPAA. Residues 128–137 carry the Nuclear export signal motif; that stretch reads LPPHLALRLR. The segment at 163–176 is binding to PP1CA; the sequence is RGKVCFSPRVQVRH. Residues 163–176 form an interaction with host PPP1CA region; that stretch reads RGKVCFSPRVQVRH. The interval 178 to 261 is important for interferon resistance; it reads VAWETAARLA…AAAGPGRRAV (84 aa). A Bipartite nuclear localization signal motif is present at residues 188-206; it reads RRGSWARERADRDRFRRRV. The tract at residues 206–221 is interaction with host EIF2S1/EIF-2ALPHA; sequence VAAAEAVIGPCLEPEA. The tract at residues 223–261 is disordered; the sequence is ARARARARAHEDGGPAEEEEAAAAARGSSAAAGPGRRAV. Low complexity predominate over residues 244-261; the sequence is AAAARGSSAAAGPGRRAV.

The protein belongs to the PPP1R15 family. In terms of assembly, interacts with host PPP1CA to form a high-molecular-weight complex that dephosphorylates EIF2S1/eIF-2alpha. Interacts with host EIF2S1/eIF-2alpha; this interaction is crucial for the specific dephosphorylation of EIF2S1/eIF-2alpha by PPP1CA.

It is found in the host cytoplasm. Its subcellular location is the host nucleus. It localises to the host nucleolus. The protein localises to the virion. Plays essential roles in viral nuclear egress to mediate capsid transit across the nuclear membrane and also in the inhibition of host immune response and integrated stress response (ISR). Facilitates nuclear egress cooperatively with host C1QBP and protein kinase C/PKC to induce lamin A/C phosphorylation and subsequent reorganization. In turn, lamina disassembles and nuclear egress occurs. Recruits the serine/threonine-protein phosphatase PPP1CA/PP1-alpha to dephosphorylate the translation initiation factor EIF2S1/eIF-2alpha, thereby couteracting the host shutoff of protein synthesis involving double-stranded RNA-dependent protein kinase EIF2AK2/PKR. Also down-modulates the host MHC class II proteins cell surface expression. Acts as a neurovirulence factor that has a profound effect on the growth of the virus in central nervous system tissue, probably through its ability to maintain an environment favorable for viral replication. The chain is Neurovirulence factor ICP34.5 (RL1) from Human herpesvirus 2 (strain HG52) (HHV-2).